The following is a 90-amino-acid chain: Movement protein (90 aa).

Residues 32-52 (FVFVTFGLLIAVGVAWLAYTL) form a helical membrane-spanning segment.

Belongs to the mastrevirus movement protein family. In terms of assembly, interacts with the capsid protein (CP). Part of a MP-CP-viral DNA complex.

It localises to the host membrane. In terms of biological role, involved in the viral transport within, and between cells. The polypeptide is Movement protein (Wheat dwarf virus (isolate Sweden) (WDV)).